Consider the following 304-residue polypeptide: Ribonuclease Z (304 aa).

Positions 64, 66, 68, 69, 141, 209, and 267 each coordinate Zn(2+). The active-site Proton acceptor is the D68.

The protein belongs to the RNase Z family. In terms of assembly, homodimer. Zn(2+) is required as a cofactor.

It catalyses the reaction Endonucleolytic cleavage of RNA, removing extra 3' nucleotides from tRNA precursor, generating 3' termini of tRNAs. A 3'-hydroxy group is left at the tRNA terminus and a 5'-phosphoryl group is left at the trailer molecule.. Its function is as follows. Zinc phosphodiesterase, which displays some tRNA 3'-processing endonuclease activity. Probably involved in tRNA maturation, by removing a 3'-trailer from precursor tRNA. In Thermoplasma volcanium (strain ATCC 51530 / DSM 4299 / JCM 9571 / NBRC 15438 / GSS1), this protein is Ribonuclease Z.